Here is a 670-residue protein sequence, read N- to C-terminus: Extracellular matrix protein 2 (670 aa).

Residues 1-19 (MKLAVLFCFILLIVLQTDC) form the signal peptide. Residues 96–153 (GYCFVKGMIMYNKAVWSPEPCTTCLCSNGRVLCDETECHPKACPYTIKPEGECCPICS) enclose the VWFC domain. The tract at residues 185-270 (SEEDEEIAEG…EEDAIRGDVF (86 aa)) is disordered. The segment covering 192-227 (AEGHKEHKKETSVPTKIHGDGERTERKLRPEKEGRS) has biased composition (basic and acidic residues). Residues 241–263 (ESKEETEREGEEEEEEEEEEEED) show a composition bias toward acidic residues. A Cell attachment site motif is present at residues 266–268 (RGD). An LRRNT domain is found at 278 to 315 (PGTPRGRPRLPRSCSLSYRTISCVHADFTEIPPITAPE). LRR repeat units lie at residues 339–359 (NLER…GPKA), 365–386 (KLMR…LPST), 387–407 (LEEL…SLSD), 410–430 (QLVT…DPLA), 436–456 (SLSY…GLPA), 457–478 (STEE…CFNH), 481–501 (KITM…APLA), 507–528 (NLES…LPKS), 529–549 (LLHL…VFGH), 553–573 (GLEY…DLVS), 580–601 (SLRE…IQDM), 603–624 (ALHF…QICN), and 632–655 (ALEH…AFSC). N-linked (GlcNAc...) asparagine glycosylation is present at Asn-349. N-linked (GlcNAc...) asparagine glycosylation is present at Asn-420. Asn-477 is a glycosylation site (N-linked (GlcNAc...) asparagine).

Belongs to the small leucine-rich proteoglycan (SLRP) family. SLRP class I subfamily. In terms of assembly, interacts with numerous extracellular matrix proteins. Interacts with isoform 1 of MSL1. Interacts with isoform 3 of RASSF1.

It is found in the secreted. It localises to the extracellular space. The protein localises to the extracellular matrix. Its function is as follows. Promotes matrix assembly and cell adhesiveness. This chain is Extracellular matrix protein 2 (Ecm2), found in Mus musculus (Mouse).